A 230-amino-acid chain; its full sequence is MHDPENRLTDAYEPEVGNLPNEDSGRDEENVVKTGTTTVGLSTEDGVIIATDRRASLGGRFVSNKQVQKVEQIHPTAAMTLVGSVGGAQSFIRSLRAEADLYEVRRDEPLSIHALATLAGNFARGGPYFAINPIVGGVDEEGSHVYSVDPAGGVLEDDYTVTGSGTMVATGTIEGQYDHGMSLSEARDLAIRAVNAAAERDTGSGNGVVLAEITDEGVEIDAFDDYESAE.

Basic and acidic residues predominate over residues 1–10; that stretch reads MHDPENRLTD. The segment at 1–29 is disordered; it reads MHDPENRLTDAYEPEVGNLPNEDSGRDEE. The propeptide at 1–35 is removed in mature form; by autocatalysis; the sequence is MHDPENRLTDAYEPEVGNLPNEDSGRDEENVVKTG. Catalysis depends on T36, which acts as the Nucleophile.

This sequence belongs to the peptidase T1B family. In terms of assembly, the 20S proteasome core is composed of 14 alpha and 14 beta subunits that assemble into four stacked heptameric rings, resulting in a barrel-shaped structure. The two inner rings, each composed of seven catalytic beta subunits, are sandwiched by two outer rings, each composed of seven alpha subunits. The catalytic chamber with the active sites is on the inside of the barrel. Has a gated structure, the ends of the cylinder being occluded by the N-termini of the alpha-subunits. Is capped at one or both ends by the proteasome regulatory ATPase, PAN.

Its subcellular location is the cytoplasm. It catalyses the reaction Cleavage of peptide bonds with very broad specificity.. With respect to regulation, the formation of the proteasomal ATPase PAN-20S proteasome complex, via the docking of the C-termini of PAN into the intersubunit pockets in the alpha-rings, triggers opening of the gate for substrate entry. Interconversion between the open-gate and close-gate conformations leads to a dynamic regulation of the 20S proteasome proteolysis activity. Functionally, component of the proteasome core, a large protease complex with broad specificity involved in protein degradation. The protein is Proteasome subunit beta 2 of Haloarcula marismortui (strain ATCC 43049 / DSM 3752 / JCM 8966 / VKM B-1809) (Halobacterium marismortui).